The chain runs to 105 residues: Small ribosomal subunit protein uS10 (105 aa).

It belongs to the universal ribosomal protein uS10 family. As to quaternary structure, part of the 30S ribosomal subunit.

Involved in the binding of tRNA to the ribosomes. This Rickettsia felis (strain ATCC VR-1525 / URRWXCal2) (Rickettsia azadi) protein is Small ribosomal subunit protein uS10.